The primary structure comprises 437 residues: Elongation factor 1-gamma (437 aa).

Residue Ala2 is modified to N-acetylalanine. Residues 2 to 87 (AAGTLYTYPE…YVSNEELRGS (86 aa)) enclose the GST N-terminal domain. Residues 88-216 (TPEAAAQVVQ…VKLCEKMAQF (129 aa)) enclose the GST C-terminal domain. Lys147 and Lys212 each carry N6-acetyllysine. Residues 221 to 254 (FAESQPKKDTPRKEKGSREEKQKPQAERKEEKKA) show a composition bias toward basic and acidic residues. Positions 221–268 (FAESQPKKDTPRKEKGSREEKQKPQAERKEEKKAAAPAPEEEMDECEQ) are disordered. Lys253 is covalently cross-linked (Glycyl lysine isopeptide (Lys-Gly) (interchain with G-Cter in SUMO1)). The EF-1-gamma C-terminal domain occupies 276 to 437 (AKDPFAHLPK…KAFNQGKIFK (162 aa)). Lys285 participates in a covalent cross-link: Glycyl lysine isopeptide (Lys-Gly) (interchain with G-Cter in SUMO2). Lys401 is modified (N6-acetyllysine). N6-acetyllysine; alternate is present on Lys434. Lys434 is modified (N6-malonyllysine; alternate).

EF-1 is composed of four subunits: alpha, beta, delta, and gamma.

Probably plays a role in anchoring the complex to other cellular components. The sequence is that of Elongation factor 1-gamma (EEF1G) from Equus caballus (Horse).